The chain runs to 900 residues: Alanine--tRNA ligase (900 aa).

Zn(2+)-binding residues include H568, H572, C672, and H676.

It belongs to the class-II aminoacyl-tRNA synthetase family. It depends on Zn(2+) as a cofactor.

Its subcellular location is the cytoplasm. It carries out the reaction tRNA(Ala) + L-alanine + ATP = L-alanyl-tRNA(Ala) + AMP + diphosphate. Functionally, catalyzes the attachment of alanine to tRNA(Ala) in a two-step reaction: alanine is first activated by ATP to form Ala-AMP and then transferred to the acceptor end of tRNA(Ala). Also edits incorrectly charged Ser-tRNA(Ala) and Gly-tRNA(Ala) via its editing domain. This Mycoplasma genitalium (strain ATCC 33530 / DSM 19775 / NCTC 10195 / G37) (Mycoplasmoides genitalium) protein is Alanine--tRNA ligase.